We begin with the raw amino-acid sequence, 72 residues long: Mitotic-spindle organizing protein 1 (72 aa).

The protein belongs to the MOZART1 family. As to quaternary structure, part of the gamma-tubulin complex.

The protein resides in the cytoplasm. Its subcellular location is the cytoskeleton. It is found in the microtubule organizing center. It localises to the spindle pole body. In terms of biological role, required for gamma-tubulin complex recruitment to the microtubule organizing center (MTOC). The protein is Mitotic-spindle organizing protein 1 of Coccidioides immitis (strain RS) (Valley fever fungus).